The sequence spans 347 residues: VIP36-like protein (347 aa).

The signal sequence occupies residues 1–43; that stretch reads MAAASRPSWWQRWRRRAWARDGAKLLLFLLLLGSGPGPRHVRA. Residues 44–312 lie on the Lumenal side of the membrane; sequence GQAVEYLKRE…VPPTPLSGLA (269 aa). One can recognise an L-type lectin-like domain in the interval 48 to 273; the sequence is EYLKREHSLS…DVISLKLFEL (226 aa). S92 and D127 together coordinate a carbohydrate. Ca(2+) is bound by residues D158, Y160, and N162. An a carbohydrate-binding site is contributed by 160-162; the sequence is YPN. N180 carries an N-linked (GlcNAc...) asparagine glycan. H187 lines the a carbohydrate pocket. Residue D190 coordinates Ca(2+). C199 and C236 form a disulfide bridge. 257–259 provides a ligand contact to a carbohydrate; sequence GDL. The helical transmembrane segment at 313–335 threads the bilayer; the sequence is LFLIVFFSLVFSVFAIVIGIILY. Residues 336-347 are Cytoplasmic-facing; it reads NKWQDQSRKRFY. Positions 343 to 345 match the Endoplasmic reticulum retention signal motif; sequence RKR.

It localises to the endoplasmic reticulum membrane. The protein localises to the golgi apparatus membrane. In terms of biological role, may be involved in the regulation of export from the endoplasmic reticulum of a subset of glycoproteins. May function as a regulator of ERGIC-53. In Mus musculus (Mouse), this protein is VIP36-like protein (Lman2l).